Here is a 231-residue protein sequence, read N- to C-terminus: Cysteine-rich venom protein VAR10 (231 aa).

Residues 1–19 form the signal peptide; that stretch reads MILLKLYLTLAAILCQSRG. The SCP domain maps to 41–169; the sequence is NKHNDLRRTV…SLKYFQVCQY (129 aa). 5 disulfide bridges follow: C77/C156, C95/C170, C151/C167, C189/C196, and C214/C231. The region spanning 205–231 is the ShKT domain; that stretch reads CAYNDDYTSCPDLTKQVGCHHPVTANC.

The protein belongs to the CRISP family. Post-translationally, contains 8 disulfide bonds. Expressed by the venom gland.

It is found in the secreted. Blocks ryanodine receptors, and potassium channels. The chain is Cysteine-rich venom protein VAR10 from Varanus varius (Lace monitor lizard).